The primary structure comprises 106 residues: Large ribosomal subunit protein eL42 (106 aa).

This sequence belongs to the eukaryotic ribosomal protein eL42 family.

In Schwanniomyces occidentalis (Yeast), this protein is Large ribosomal subunit protein eL42 (RPL44).